The chain runs to 145 residues: Large ribosomal subunit protein uL15 (145 aa).

The disordered stretch occupies residues 1 to 55; the sequence is MSLLKTLAPKAGSKHAPKRIGRGIGSGMGGTATKGHKGQLARTGGTVRRGFEGGQ. Residues 12–21 are compositionally biased toward basic residues; it reads GSKHAPKRIG. Positions 22 to 32 are enriched in gly residues; the sequence is RGIGSGMGGTA.

This sequence belongs to the universal ribosomal protein uL15 family. As to quaternary structure, part of the 50S ribosomal subunit.

In terms of biological role, binds to the 23S rRNA. The polypeptide is Large ribosomal subunit protein uL15 (Bdellovibrio bacteriovorus (strain ATCC 15356 / DSM 50701 / NCIMB 9529 / HD100)).